The primary structure comprises 500 residues: Coiled-coil domain-containing protein 85A (500 aa).

Positions 1–23 (MSKAAGGSAPAAESCPSAPAGAS) are enriched in low complexity. Positions 1 to 30 (MSKAAGGSAPAAESCPSAPAGASTPTGVDD) are disordered. Coiled-coil stretches lie at residues 38-104 (ELLQ…RDLC) and 132-171 (MHKE…DEEK). Disordered regions lie at residues 200 to 405 (RDVG…SGMN) and 426 to 465 (NRML…QPEP). Positions 204–215 (DGSSTSSTGSTD) are enriched in low complexity. Basic and acidic residues predominate over residues 231 to 254 (HLQKPRSEGSPEHTKHRSTSPEHL). Positions 372–381 (GSGGSGGGSR) are enriched in gly residues. Positions 383–395 (GTLRRPAQEDSSS) are enriched in basic and acidic residues. Residues 404 to 429 (MNESTLSYVRQLEARVRQLEEENRML) are a coiled coil. The segment covering 434 to 463 (FRLSSGADGNNSSLNSPASFSGHTTPSQQP) has biased composition (polar residues). Arginine 488 carries the post-translational modification Asymmetric dimethylarginine.

This sequence belongs to the CCDC85 family. May interact with ARVCF; CTNND1; CTNND2 and PKP4.

It localises to the cell junction. It is found in the adherens junction. Its function is as follows. May play a role in cell-cell adhesion and epithelium development through its interaction with proteins of the beta-catenin family. In Mus musculus (Mouse), this protein is Coiled-coil domain-containing protein 85A (Ccdc85a).